The chain runs to 500 residues: Cytochrome c-552 (500 aa).

Residues 1-24 form the signal peptide; it reads MKFLIKSLAVATISILGCLQTALA. His102, Cys130, Cys133, Lys134, Cys168, Cys171, His172, Cys217, Cys220, and His221 together coordinate heme c. The Ca(2+) site is built by Glu223, Tyr224, Lys268, and Gln270. Tyr224 provides a ligand contact to substrate. His271 lines the substrate pocket. 9 residues coordinate heme c: His282, Cys289, Cys292, His293, His308, Cys321, Cys324, His325, and His400. Residues 477-500 form a disordered region; that stretch reads ARAKGLLPAEEADKPVAAPKAEAK.

The protein belongs to the cytochrome c-552 family. Requires Ca(2+) as cofactor. Heme c is required as a cofactor.

It is found in the periplasm. The catalysed reaction is 6 Fe(III)-[cytochrome c] + NH4(+) + 2 H2O = 6 Fe(II)-[cytochrome c] + nitrite + 8 H(+). It functions in the pathway nitrogen metabolism; nitrate reduction (assimilation). Functionally, catalyzes the reduction of nitrite to ammonia, consuming six electrons in the process. The sequence is that of Cytochrome c-552 from Mannheimia haemolytica (Pasteurella haemolytica).